The primary structure comprises 245 residues: E3 ubiquitin-protein ligase RNF138 (245 aa).

Residues 18–58 (CPVCQEVLKTPVRTAACQHVFCRKCFLTAMRESGIHCPLCR) form an RING-type zinc finger. Zn(2+)-binding residues include C86, C89, H101, and C105. The segment at 86-105 (CRCCSKKIKFYRMRHHYKSC) adopts a C2HC RNF-type zinc-finger fold. Residues 128–154 (VRSSNRSETSASDNTETYQEDTSSSGH) are disordered. T142 bears the Phosphothreonine mark. 2 C2H2-type zinc fingers span residues 157–180 (FKCP…NSNH) and 187–215 (VTCP…NQRH). Residues 225 to 243 (LQLDEETQYQTAVEESFQV) enclose the UIM domain.

As to quaternary structure, interacts with NLK. Interacts with XRCC5/Ku80. Interacts with RBBP8/CtIP. Post-translationally, auto-ubiquitinated.

The protein localises to the chromosome. It carries out the reaction S-ubiquitinyl-[E2 ubiquitin-conjugating enzyme]-L-cysteine + [acceptor protein]-L-lysine = [E2 ubiquitin-conjugating enzyme]-L-cysteine + N(6)-ubiquitinyl-[acceptor protein]-L-lysine.. It functions in the pathway protein modification; protein ubiquitination. E3 ubiquitin-protein ligase involved in DNA damage response by promoting DNA resection and homologous recombination. Recruited to sites of double-strand breaks following DNA damage and specifically promotes double-strand break repair via homologous recombination. Two different, non-exclusive, mechanisms have been proposed. According to a report, regulates the choice of double-strand break repair by favoring homologous recombination over non-homologous end joining (NHEJ): acts by mediating ubiquitination of XRCC5/Ku80, leading to remove the Ku complex from DNA breaks, thereby promoting homologous recombination. According to another report, cooperates with UBE2Ds E2 ubiquitin ligases (UBE2D1, UBE2D2, UBE2D3 or UBE2D4) to promote homologous recombination by mediating ubiquitination of RBBP8/CtIP. Together with NLK, involved in the ubiquitination and degradation of TCF/LEF. Also exhibits auto-ubiquitination activity in combination with UBE2K. May act as a negative regulator in the Wnt/beta-catenin-mediated signaling pathway. The chain is E3 ubiquitin-protein ligase RNF138 from Mus musculus (Mouse).